Consider the following 129-residue polypeptide: uncharacterized protein (129 aa).

The protein belongs to the asfivirus C129R family.

It localises to the virion. Functionally, plays a role in the inhibition of type I interferon signaling pathway. Mechanistically, specifically interacts with 2',3'-cGAMP and cleaves it via its phosphodiesterase activity. In turn, prevents 2',3'-cGAMP interaction with host ER-resident STING1 leading to inhibition of downstream signaling pathway and type I interferon production. This is an uncharacterized protein from African swine fever virus (isolate Pig/Kenya/KEN-50/1950) (ASFV).